A 1479-amino-acid polypeptide reads, in one-letter code: MIERGKFRSLTLVNWNGFFARTFDLDELVTTLSGGNGAGKSTTMAAFITALIPDLTLLHFRNTTEAGATSGSRDKGLHGKLRAGVCYSTLDVVNSRHQRVLVGVRLQQVAGRDRKVDIKPFTIQGLPTAIQPTQILTQIVGDRQARVLSLQELKERVEEMEGVQFKQFNSITDYHSLMFDLGVVPRRLRSASDRSKFYRLIEASLYGGISSAITRSLRDYLLPENSGVRKAFQDMEAALRENRMTLEAIRVTQSDRDLFKHLISEATSYVAADYMRHANERRIHLDGALELRRDLFSSRKQLSSEQYRHVEMARELTEQNDTEGDLETDYQAASDHLNLVQTAMRQQEKIERYNADLEELSYRLEEQNEVVEEARDQQAENEERADAAELEVDELKSQLADYQQALDVQQTRAIQYQQAQQALERARTLCQLPDLTAENADEWLDSYQAREQEATEILLMLEQKLSVADAAHGQFEQAYQLVSKIAGAVSRSEAWQVARDLLRDSSSQRYQAERVQPLRMRLSELEQRLREQQDAERLLQDFSKRNGQDYQPEELESLQQELDARIETLSSLVAEAGERRMTLRQELEQTQQRIQKLTARAPVWLAAQETLTQLSEQSGETFEDSRQVTEFMQQLLERERETTVERDDIAARKRQIEAQVDRLSQPGGSEDPRLNALAERFGGVLLSEIYDDVTLDDAPYFSALYGPSRHAIVVSDLSLIRDQLAGLEDCPEDLYLIEGDPQSFDDSVFAVDELERAVVVKVAERQWRYSRFPEVPLFGRAAREMRLEGLRDEREALAEQYATLSFDVQKTQRLHQSFSRFIGTHLAVVFDEDPEAEIRTLSSRRGELDRAMASFDGENQQQRQQYEQAKEASGQLNKLIPRISLLCDETLQDRVEEIRAELDETEESARFIQQHGVTLTKLEPLVSVLQSDPQQHEQLQEDYTQAQNAQRQAKQQAFTLTEVVQRRAHFSYADSAGMLGENAGLNDKLRHRLEQAEAERTKAREQLRQHQTQLTQYSQVQASLKSSYDAKQDMLKELLQELQDIGVRADADAEARARQRRDELHAALSTNRSRRNQLEKQITFCEAEMDSVQKKLRKLERDYHQMREQVVTAKAGWCTVMRLVKDNGVERRLHRRELAYMEGDELRSMSDKALGALRLAVADNEHLRDVLRLSEDPKRPERKIQFYIAVYQHLRERIRQDIIRTDDPVEAIEQMEIELNRLTEELMAREQMLAISSRSVANIIRKTIQREQNRIRMLNQGLQAVSFGQVKSVRLNVNVRETHTTLLNVLSEQQEMHQDLFNSNRLTFSEALAKLYQRLNPEIDMGQRTPQTIGEELLDYRNYLEMEVEVNRGADGWLRAESGALSTGEAIGTGMSILVMVVQSWEEESKRLRGKDIIPCRLLFLDEAARLDAKSIATLFELCDRLEMQLVIAAPENISPEKGTTYKLVRKVYQNNEHVHVVGLRGFGTETPETQEPAS.

Position 34–41 (34–41) interacts with ATP; it reads GGNGAGKS. Coiled-coil stretches lie at residues 337 to 418, 511 to 604, 780 to 810, 847 to 1116, and 1206 to 1265; these read LNLV…QYQQ, QAER…APVW, RAAR…DVQK, ELDR…AKAG, and DDPV…LQAV. Residues 666-783 are flexible hinge; sequence PGGSEDPRLN…EVPLFGRAAR (118 aa).

Belongs to the SMC family. MukB subfamily. As to quaternary structure, homodimerization via its hinge domain. Binds to DNA via its C-terminal region. Interacts, and probably forms a ternary complex, with MukE and MukF via its C-terminal region. The complex formation is stimulated by calcium or magnesium. Interacts with tubulin-related protein FtsZ.

Its subcellular location is the cytoplasm. It is found in the nucleoid. Plays a central role in chromosome condensation, segregation and cell cycle progression. Functions as a homodimer, which is essential for chromosome partition. Involved in negative DNA supercoiling in vivo, and by this means organize and compact chromosomes. May achieve or facilitate chromosome segregation by condensation DNA from both sides of a centrally located replisome during cell division. This is Chromosome partition protein MukB from Pectobacterium atrosepticum (strain SCRI 1043 / ATCC BAA-672) (Erwinia carotovora subsp. atroseptica).